Consider the following 318-residue polypeptide: Aldo-keto reductase family 1 member C21 (318 aa).

Residue 20 to 24 participates in NADP(+) binding; it reads GFGTA. Residue Lys-31 participates in substrate binding. Asp-50 lines the NADP(+) pocket. The active-site Proton donor is Tyr-55. Position 117 (His-117) interacts with substrate. NADP(+) contacts are provided by residues 166–167, Gln-190, 216–224, and 270–280; these read SN, YGVLGTQRY, and TSLKEERIKEN.

This sequence belongs to the aldo/keto reductase family. Monomer.

It is found in the cytoplasm. It catalyses the reaction androsterone + NADP(+) = 5alpha-androstan-3,17-dione + NADPH + H(+). The enzyme catalyses androsterone + NAD(+) = 5alpha-androstan-3,17-dione + NADH + H(+). NADP-dependent 17-alpha-hydroxysteroid dehydrogenase that converts 5-alpha-androstane-3,17-dione into androsterone. Has lower 3-alpha-hydroxysteroid dehydrogenase activity. Has broad substrate specificity and acts on various 17-alpha-hydroxysteroids, 17-ketosteroids, 3-alpha hydroxysteroids and 3-ketosteroids. Reduction of keto groups is strictly stereoselective. Reduction of 17-ketosteroids yields only 17-alpha-hydroxysteroids. Likewise, reduction of 3-ketosteroids yields only 3-alpha-hydroxysteroids. This chain is Aldo-keto reductase family 1 member C21 (Akr1c21), found in Rattus norvegicus (Rat).